A 132-amino-acid polypeptide reads, in one-letter code: Small ribosomal subunit protein uS11 (132 aa).

It belongs to the universal ribosomal protein uS11 family. As to quaternary structure, part of the 30S ribosomal subunit. Interacts with proteins S7 and S18. Binds to IF-3.

Its function is as follows. Located on the platform of the 30S subunit, it bridges several disparate RNA helices of the 16S rRNA. Forms part of the Shine-Dalgarno cleft in the 70S ribosome. The sequence is that of Small ribosomal subunit protein uS11 from Lachnoclostridium phytofermentans (strain ATCC 700394 / DSM 18823 / ISDg) (Clostridium phytofermentans).